Reading from the N-terminus, the 103-residue chain is MAKKSLIQREKKRQKLEQKYHLIRQSLKKKIRSKVSPLSLSEKTKMREKLQSLPRNSAPTRLHRRCFLTGRPRANYRDFGLSGHVLREMVYECLLPGATRSSW.

The disordered stretch occupies residues 34 to 56 (KVSPLSLSEKTKMREKLQSLPRN).

The protein belongs to the universal ribosomal protein uS14 family. As to quaternary structure, part of the 30S ribosomal subunit.

The protein resides in the plastid. It is found in the chloroplast. Binds 16S rRNA, required for the assembly of 30S particles. This Brachypodium distachyon (Purple false brome) protein is Small ribosomal subunit protein uS14c.